A 515-amino-acid chain; its full sequence is Galactose/methyl galactoside import ATP-binding protein MglA (515 aa).

ABC transporter domains are found at residues 8 to 243 and 254 to 499; these read LEMR…VGRE and IPKE…AKYL. 40 to 47 lines the ATP pocket; that stretch reads GENGAGKS.

It belongs to the ABC transporter superfamily. Galactose/methyl galactoside importer (TC 3.A.1.2.3) family. In terms of assembly, the complex is composed of one ATP-binding protein (MglA), two transmembrane proteins (MglC) and a solute-binding protein (MglB).

The protein resides in the cell membrane. It catalyses the reaction D-galactose(out) + ATP + H2O = D-galactose(in) + ADP + phosphate + H(+). The catalysed reaction is methyl beta-D-galactoside(out) + ATP + H2O = methyl beta-D-galactoside(in) + ADP + phosphate + H(+). Functionally, part of the ABC transporter complex MglABC involved in galactose/methyl galactoside import. Responsible for energy coupling to the transport system. The chain is Galactose/methyl galactoside import ATP-binding protein MglA from Clostridium perfringens (strain SM101 / Type A).